The sequence spans 405 residues: L-cysteine:1D-myo-inositol 2-amino-2-deoxy-alpha-D-glucopyranoside ligase (405 aa).

Zn(2+) is bound at residue Cys43. L-cysteinyl-5'-AMP-binding positions include 43–46 (CGIT), Thr58, and 81–83 (NIT). A 'HIGH' region motif is present at residues 45 to 55 (ITPYDATHLGH). A 'ERGGDP' region motif is present at residues 187–192 (ERGGDP). Position 227 (Trp227) interacts with L-cysteinyl-5'-AMP. Cys231 is a Zn(2+) binding site. 249 to 251 (GSD) is an L-cysteinyl-5'-AMP binding site. His256 serves as a coordination point for Zn(2+). Ile283 contacts L-cysteinyl-5'-AMP. Positions 289–293 (KMSKS) match the 'KMSKS' region motif.

The protein belongs to the class-I aminoacyl-tRNA synthetase family. MshC subfamily. Monomer. The cofactor is Zn(2+).

The enzyme catalyses 1D-myo-inositol 2-amino-2-deoxy-alpha-D-glucopyranoside + L-cysteine + ATP = 1D-myo-inositol 2-(L-cysteinylamino)-2-deoxy-alpha-D-glucopyranoside + AMP + diphosphate + H(+). Functionally, catalyzes the ATP-dependent condensation of GlcN-Ins and L-cysteine to form L-Cys-GlcN-Ins. This is L-cysteine:1D-myo-inositol 2-amino-2-deoxy-alpha-D-glucopyranoside ligase from Nakamurella multipartita (strain ATCC 700099 / DSM 44233 / CIP 104796 / JCM 9543 / NBRC 105858 / Y-104) (Microsphaera multipartita).